Reading from the N-terminus, the 568-residue chain is Tetratricopeptide repeat protein 22 (568 aa).

TPR repeat units lie at residues 66-99 (PAVRHLLGTFSFYLEELGDAREHFLEVARKDPGN), 101-133 (NAWANLAHVYGQLGQEEEEEASAGRLASLMGLE), 155-190 (YAHGFDVGCASPEERAQVLEAGIALYDKALGYGQQI), 203-237 (ATLFIRLDGIFLEMGSEEQKRLPAFNRTLALLGEV), 260-294 (KDTFSTTPMGVHEYGYSGTEPLDCFGKAIEIAKNQ), 296-328 (PILNRLAKIFHFLGKQDMAVGTCNMVLAVLTDP), and 432-465 (PELQLLRGKCLRVQGEDANAAACFKRAVELDDEG).

This Mus musculus (Mouse) protein is Tetratricopeptide repeat protein 22 (Ttc22).